We begin with the raw amino-acid sequence, 407 residues long: Probable tRNA sulfurtransferase (407 aa).

A THUMP domain is found at 61-165 (NEITYRLSKI…LDAIYMYEEV (105 aa)). Residues 183–184 (ML), 208–209 (HF), arginine 265, glycine 287, and glutamine 296 contribute to the ATP site.

It belongs to the ThiI family.

It localises to the cytoplasm. It catalyses the reaction [ThiI sulfur-carrier protein]-S-sulfanyl-L-cysteine + a uridine in tRNA + 2 reduced [2Fe-2S]-[ferredoxin] + ATP + H(+) = [ThiI sulfur-carrier protein]-L-cysteine + a 4-thiouridine in tRNA + 2 oxidized [2Fe-2S]-[ferredoxin] + AMP + diphosphate. The catalysed reaction is [ThiS sulfur-carrier protein]-C-terminal Gly-Gly-AMP + S-sulfanyl-L-cysteinyl-[cysteine desulfurase] + AH2 = [ThiS sulfur-carrier protein]-C-terminal-Gly-aminoethanethioate + L-cysteinyl-[cysteine desulfurase] + A + AMP + 2 H(+). It participates in cofactor biosynthesis; thiamine diphosphate biosynthesis. Functionally, catalyzes the ATP-dependent transfer of a sulfur to tRNA to produce 4-thiouridine in position 8 of tRNAs, which functions as a near-UV photosensor. Also catalyzes the transfer of sulfur to the sulfur carrier protein ThiS, forming ThiS-thiocarboxylate. This is a step in the synthesis of thiazole, in the thiamine biosynthesis pathway. The sulfur is donated as persulfide by IscS. In Staphylococcus aureus (strain bovine RF122 / ET3-1), this protein is Probable tRNA sulfurtransferase.